The primary structure comprises 125 residues: MAVYAKDLDNNKELNQKLINDQLKIIDTLLLAEKKNFLVHELPAHYDFSSGDPLASQRDIYYAIIKSLEERGFTVKICMKGDRALLFITWKKIQSIEINKKEEYLRMHFIQDEEKAFYCKFLESR.

Belongs to the asfivirus B125R family.

This is an uncharacterized protein from African swine fever virus (isolate Tick/Malawi/Lil 20-1/1983) (ASFV).